We begin with the raw amino-acid sequence, 759 residues long: MSKTIILLAFFLSIVLNVQISFVVAESKVYVVYLGEKEHDNPESVTESHHQMLWSLLGSKEAVLDSIVYSYRHGFSGFAAKLTESQAQQISELPEVVQVIPNTLYEMTTTRTWDYLGVSPGNSDSLLQKANMGYNVIVGVIDTGVWPESEMFNDKGYGPIPSRWKGGCESGELFNGSIHCNRKLIGAKYFIDANNAQFGVLNKTENPDYLSPRDFNGHGTHVASTIGGSFLPNVSYLGLGRGTARGGAPGVHIAVYKACWVQRGCSGADVLKAMDEAIHDGVDILSLSLQTSVPLFPETDARELTSVGAFHAVAKGIPVVAAASNAGPTAQTLSNVAPWVLTVAATTQDRSFPTAITLGNNITILGQAIFGGSELGFVGLTYPESPLSGDCEKLSANPKSAMEGKVVLCFAASTPSNAAITAVINAGGLGLIMARNPTHLLRPLRNFPYVSVDFELGTDILFYIRSTRSPIVNIQASRTLFGQSVSTKVATFSSRGPNSVSPAILKPDIAAPGVNILAAISPNSINDGGFAMMSGTSMATPVVSGVVVLLKSLHPDWSPSAIKSAIVTTAWRTDPSGEPIFADGSSRKLADPFDYGGGLINPEKAVKPGLIYDMTTDDYVMYMCSVDYSDISISRVLGKITVCPNPKPSVLDLNLPSITIPNLRGEVTLTRTVTNVGPVNSVYKVVIDPPTGVNVAVTPTELVFDSTTTKRSFTVRVSTTHKVNTGYYFGSLTWTDTLHNVAIPVSVRTQILQRYYDEN.

The signal sequence occupies residues 1 to 25; that stretch reads MSKTIILLAFFLSIVLNVQISFVVA. Residues 26–108 constitute a propeptide, activation peptide; the sequence is ESKVYVVYLG…VIPNTLYEMT (83 aa). Positions 29-106 constitute an Inhibitor I9 domain; that stretch reads VYVVYLGEKE…VQVIPNTLYE (78 aa). One can recognise a Peptidase S8 domain in the interval 112-606; that stretch reads TWDYLGVSPG…GGLINPEKAV (495 aa). The Charge relay system role is filled by Asp142. Asn175 and Asn202 each carry an N-linked (GlcNAc...) asparagine glycan. The Charge relay system role is filled by His218. N-linked (GlcNAc...) asparagine glycans are attached at residues Asn233 and Asn361. Positions 390-464 constitute a PA domain; that stretch reads DCEKLSANPK…ELGTDILFYI (75 aa). The active-site Charge relay system is the Ser537.

Belongs to the peptidase S8 family.

Its subcellular location is the secreted. In Arabidopsis thaliana (Mouse-ear cress), this protein is Subtilisin-like protease SBT3.10.